Here is a 1188-residue protein sequence, read N- to C-terminus: Carboxylic acid reductase (1188 aa).

Residues histidine 315, serine 408, 429-430, threonine 434, aspartate 507, 519-522, lysine 528, and lysine 629 each bind AMP; these read DG and YVDR. The Carrier domain occupies 665-743; that stretch reads AGERPVIETV…SVAAHIEKER (79 aa). Position 702 is an O-(pantetheine 4'-phosphoryl)serine (serine 702). Residues 801-804, arginine 828, arginine 838, 868-869, 894-896, serine 934, tyrosine 970, lysine 974, and serine 997 each bind NADP(+); these read NGWL, DF, and SGA.

Belongs to the ATP-dependent AMP-binding enzyme family. Carboxylic acid reductase subfamily. Requires pantetheine 4'-phosphate as cofactor.

It carries out the reaction a carboxylate + ATP + NADPH + H(+) = an aldehyde + AMP + diphosphate + NADP(+). In terms of biological role, catalyzes the ATP- and NADPH-dependent reduction of carboxylic acids to the corresponding aldehydes. Catalyzes the reduction of a very wide range of carboxylic acids, including benzoic acids, heterocyclic, phenylacetic, phenylpropanoic and fatty acid substrates. This Segniliparus rugosus (strain ATCC BAA-974 / DSM 45345 / CCUG 50838 / CIP 108380 / JCM 13579 / CDC 945) protein is Carboxylic acid reductase.